The chain runs to 271 residues: MPELPEVEVTRQGVSPYLIDQEVTGLTVRNASLRWPVPDLAQQIVGQTIRSVHRRAKYLLIDTDAGTTIVHLGMSGSLRVVTELTPVEKHDHIDLSLASGKILRFNDPRRFGAWLWYELPIDAHPLLSKLGPEPLTDAFNPSYLFESLKGKKKAIKLCLMDNHIVVGVGNIYANEALFAAGIHPQMEAGKVDQERLIILVSEVKQILANAIKQGGTTLKDFTNAEGKPGYFAQKLHVYGRGGESCTQCGNLLSEIKLGQRATVFCGLCQTR.

Catalysis depends on P2, which acts as the Schiff-base intermediate with DNA. E3 functions as the Proton donor in the catalytic mechanism. The active-site Proton donor; for beta-elimination activity is K57. DNA-binding residues include H90, R109, and K151. The segment at H236–T270 adopts an FPG-type zinc-finger fold. R260 (proton donor; for delta-elimination activity) is an active-site residue.

It belongs to the FPG family. Monomer. The cofactor is Zn(2+).

It carries out the reaction Hydrolysis of DNA containing ring-opened 7-methylguanine residues, releasing 2,6-diamino-4-hydroxy-5-(N-methyl)formamidopyrimidine.. It catalyses the reaction 2'-deoxyribonucleotide-(2'-deoxyribose 5'-phosphate)-2'-deoxyribonucleotide-DNA = a 3'-end 2'-deoxyribonucleotide-(2,3-dehydro-2,3-deoxyribose 5'-phosphate)-DNA + a 5'-end 5'-phospho-2'-deoxyribonucleoside-DNA + H(+). Its function is as follows. Involved in base excision repair of DNA damaged by oxidation or by mutagenic agents. Acts as a DNA glycosylase that recognizes and removes damaged bases. Has a preference for oxidized purines, such as 7,8-dihydro-8-oxoguanine (8-oxoG). Has AP (apurinic/apyrimidinic) lyase activity and introduces nicks in the DNA strand. Cleaves the DNA backbone by beta-delta elimination to generate a single-strand break at the site of the removed base with both 3'- and 5'-phosphates. The chain is Formamidopyrimidine-DNA glycosylase from Shewanella woodyi (strain ATCC 51908 / MS32).